A 457-amino-acid polypeptide reads, in one-letter code: Fibrinogen C domain-containing protein 1 (457 aa).

A disordered region spans residues 1–20; the sequence is MGSDRWKNIGGAPQMEDSVQ. At 1 to 33 the chain is on the cytoplasmic side; the sequence is MGSDRWKNIGGAPQMEDSVQDKSQRKGCGYILC. The helical; Signal-anchor for type II membrane protein transmembrane segment at 34 to 54 threads the bilayer; sequence TVLLSVAVLLAVTVTGAVLFM. The Extracellular segment spans residues 55–457; that stretch reads NHYHAPSTEP…MKIRPQREEN (403 aa). Residues 211-235 are disordered; it reads RPRVKADLQRAPSRSSRPRGCANGS. One can recognise a Fibrinogen C-terminal domain in the interval 231–454; sequence CANGSKPRDC…FTEMKIRPQR (224 aa). A glycan (N-linked (GlcNAc...) asparagine) is linked at asparagine 233. A disulfide bond links cysteine 240 and cysteine 269. Asparagine 336 carries N-linked (GlcNAc...) asparagine glycosylation. Residues aspartate 389 and aspartate 391 each coordinate Ca(2+). A disulfide bridge links cysteine 397 with cysteine 410.

As to quaternary structure, homotetramer; disulfide-linked.

The protein resides in the membrane. Acetyl group-binding receptor which shows a calcium-dependent binding to acetylated structures such as chitin, some N-acetylated carbohydrates, and amino acids. This Xenopus tropicalis (Western clawed frog) protein is Fibrinogen C domain-containing protein 1 (fibcd1).